Reading from the N-terminus, the 300-residue chain is Ribosomal protein L11 methyltransferase (300 aa).

Residues Thr-141, Gly-164, Asp-186, and Asn-233 each contribute to the S-adenosyl-L-methionine site.

This sequence belongs to the methyltransferase superfamily. PrmA family.

The protein localises to the cytoplasm. It catalyses the reaction L-lysyl-[protein] + 3 S-adenosyl-L-methionine = N(6),N(6),N(6)-trimethyl-L-lysyl-[protein] + 3 S-adenosyl-L-homocysteine + 3 H(+). Its function is as follows. Methylates ribosomal protein L11. This is Ribosomal protein L11 methyltransferase from Synechocystis sp. (strain ATCC 27184 / PCC 6803 / Kazusa).